Here is a 120-residue protein sequence, read N- to C-terminus: NADH-ubiquinone oxidoreductase chain 3 (120 aa).

Helical transmembrane passes span 8–28 (YFILFTYIIISFILACIISLL), 63–83 (FYLVAILFFNFCLEISFLFPW), and 90–110 (ISYFGFVAIILFLFILTIGFI).

This sequence belongs to the complex I subunit 3 family.

Its subcellular location is the mitochondrion membrane. The enzyme catalyses a ubiquinone + NADH + 5 H(+)(in) = a ubiquinol + NAD(+) + 4 H(+)(out). In terms of biological role, core subunit of the mitochondrial membrane respiratory chain NADH dehydrogenase (Complex I) that is believed to belong to the minimal assembly required for catalysis. Complex I functions in the transfer of electrons from NADH to the respiratory chain. The immediate electron acceptor for the enzyme is believed to be ubiquinone. In Cyanidium caldarium (Red alga), this protein is NADH-ubiquinone oxidoreductase chain 3 (ND3).